Here is a 387-residue protein sequence, read N- to C-terminus: Odorant receptor 94a (387 aa).

Residues 1-45 (MDKHKDRIESMRLILQVMQLFGLWPWSLKSEEEWTFTGFVKRNYR) lie on the Cytoplasmic side of the membrane. A helical transmembrane segment spans residues 46–66 (FLLHLPITFTFIGLMWLEAFI). At 67-75 (SSNLEQAGQ) the chain is on the extracellular side. The helical transmembrane segment at 76 to 96 (VLYMSITEMALVVKILSIWHY) threads the bilayer. The Cytoplasmic portion of the chain corresponds to 97-133 (RTEAWRLMYELQHAPDYQLHNQEEVDFWRREQRFFKW). A helical transmembrane segment spans residues 134-154 (FFYIYILISLGVVYSGCTGVL). Residues 155–191 (FLEGYELPFAYYVPFEWQNERRYWFAYGYDMAGMTLT) lie on the Extracellular side of the membrane. Residues 192 to 212 (CISNITLDTLGCYFLFHISLL) form a helical membrane-spanning segment. Residues 213 to 255 (YRLLGLRLRETKNMKNDTIFGQQLRAIFIMHQRIRSLTLTCQR) are Cytoplasmic-facing. The chain crosses the membrane as a helical span at residues 256 to 276 (IVSPYILSQIILSALIICFSG). Over 277–290 (YRLQHVGIRDNPGQ) the chain is Extracellular. The chain crosses the membrane as a helical span at residues 291-311 (FISMLQFVSVMILQIYLPCYY). The Cytoplasmic segment spans residues 312-362 (GNEITVYANQLTNEVYHTNWLECRPPIRKLLNAYMEHLKKPVTIRAGNFFA). The helical transmembrane segment at 363–383 (VGLPIFVKTINNAYSFLALLL) threads the bilayer. Asparagine 384 carries N-linked (GlcNAc...) asparagine glycosylation. Topologically, residues 384–387 (NVSN) are extracellular.

The protein belongs to the insect chemoreceptor superfamily. Heteromeric odorant receptor channel (TC 1.A.69) family. Or2a subfamily. As to quaternary structure, interacts with Orco. Complexes exist early in the endomembrane system in olfactory sensory neurons (OSNs), coupling these complexes to the conserved ciliary trafficking pathway.

The protein localises to the cell membrane. Functionally, odorant receptor which mediates acceptance or avoidance behavior, depending on its substrates. The odorant receptor repertoire encodes a large collection of odor stimuli that vary widely in identity, intensity, and duration. May form a complex with Orco to form odorant-sensing units, providing sensitive and prolonged odorant signaling and calcium permeability. The protein is Odorant receptor 94a (Or94a) of Drosophila melanogaster (Fruit fly).